The sequence spans 201 residues: IMP cyclohydrolase (201 aa).

Belongs to the archaeal IMP cyclohydrolase family.

It catalyses the reaction IMP + H2O = 5-formamido-1-(5-phospho-D-ribosyl)imidazole-4-carboxamide. It functions in the pathway purine metabolism; IMP biosynthesis via de novo pathway; IMP from 5-formamido-1-(5-phospho-D-ribosyl)imidazole-4-carboxamide: step 1/1. Its function is as follows. Catalyzes the cyclization of 5-formylamidoimidazole-4-carboxamide ribonucleotide to IMP. This is IMP cyclohydrolase from Methanococcus maripaludis (strain DSM 14266 / JCM 13030 / NBRC 101832 / S2 / LL).